The following is a 668-amino-acid chain: Bestrophin-3 (668 aa).

The Cytoplasmic portion of the chain corresponds to 1-31; the sequence is MTVTYSSKVANATFFGFHRLLLKWRGSIYKL. Residue Ala-10 participates in Ca(2+) binding. The chain crosses the membrane as a helical span at residues 32–51; that stretch reads LYREFIVFAVLYTAISLVYR. Residues 52-60 lie on the Extracellular side of the membrane; it reads LLLTGVQKR. The chain crosses the membrane as a helical span at residues 61 to 82; sequence YFEKLSIYCDRYAEQIPVTFVL. Topologically, residues 83–237 are cytoplasmic; sequence GFYVTLVVNR…DWVGIPLVYT (155 aa). The chain crosses the membrane as a helical span at residues 238 to 255; sequence QVVTLAVYTFFFACLIGR. Topologically, residues 256 to 274 are extracellular; the sequence is QFLDPTKGYAGHDLDLYIP. The helical transmembrane segment at 275–288 threads the bilayer; it reads IFTLLQFFFYAGWL. At 289 to 668 the chain is on the cytoplasmic side; the sequence is KVAEQLINPF…LNKETEESPK (380 aa). The Ca(2+) site is built by Gln-293, Asn-296, Asp-301, and Asp-304. Disordered stretches follow at residues 400–454, 473–493, and 532–570; these read SAHE…KKSC, RETS…VRTS, and TGVQ…VSAS. The span at 425-436 shows a compositional bias: basic and acidic residues; that stretch reads PRDDLSPARDLL. The span at 475–489 shows a compositional bias: low complexity; sequence TSQTSTLQSLTPQSS. Over residues 532–545 the composition is skewed to polar residues; sequence TGVQPSKTEQQQGP.

The protein belongs to the anion channel-forming bestrophin (TC 1.A.46) family. Calcium-sensitive chloride channel subfamily. As to expression, present in skeletal muscle and weakly in brain, spinal cord, bone marrow and retina.

It localises to the cell membrane. It catalyses the reaction chloride(in) = chloride(out). Its function is as follows. Ligand-gated anion channel that allows the movement of chloride monoatomic anions across cell membranes when activated by calcium (Ca2+). In Homo sapiens (Human), this protein is Bestrophin-3.